The sequence spans 218 residues: Large ribosomal subunit protein uL3 (218 aa).

Residues 121–163 (GYQKRHGFSRGPMTHGSKNHREPGSIGPGTTPGRIYPGKRMAG) are disordered.

This sequence belongs to the universal ribosomal protein uL3 family. As to quaternary structure, part of the 50S ribosomal subunit. Forms a cluster with proteins L14 and L19.

In terms of biological role, one of the primary rRNA binding proteins, it binds directly near the 3'-end of the 23S rRNA, where it nucleates assembly of the 50S subunit. In Parasynechococcus marenigrum (strain WH8102), this protein is Large ribosomal subunit protein uL3.